The following is a 398-amino-acid chain: ATP-dependent RNA helicase eIF4A (398 aa).

A Q motif motif is present at residues 25–53 (DSFDSMDLKPELLRGVYAYGFERPSAIQQ). The Helicase ATP-binding domain maps to 56–226 (IKPIIAGHDV…TKFMRDPIRI (171 aa)). 69–76 (AQSGTGKT) contributes to the ATP binding site. A DEAD box motif is present at residues 174 to 177 (DEAD). In terms of domain architecture, Helicase C-terminal spans 237-398 (GIKQFYIAVE…EMPMNVADLI (162 aa)).

The protein belongs to the DEAD box helicase family. eIF4A subfamily. Component of the eIF4F complex, which composition varies with external and internal environmental conditions. It is composed of at least eIF4A, eIF4E and eIF4G.

It localises to the cytoplasm. The catalysed reaction is ATP + H2O = ADP + phosphate + H(+). Its function is as follows. ATP-dependent RNA helicase which is a subunit of the eIF4F complex involved in cap recognition and is required for mRNA binding to ribosome. In the current model of translation initiation, eIF4A unwinds RNA secondary structures in the 5'-UTR of mRNAs which is necessary to allow efficient binding of the small ribosomal subunit, and subsequent scanning for the initiator codon. This chain is ATP-dependent RNA helicase eIF4A (tif1), found in Aspergillus niger (strain ATCC MYA-4892 / CBS 513.88 / FGSC A1513).